The following is a 506-amino-acid chain: RNA-splicing ligase RtcB homolog (506 aa).

Positions 120, 123, 228, 260, and 354 each coordinate Mn(2+). A GMP-binding site is contributed by N227–E231. GMP contacts are provided by residues H354–N355, G403–M406, S410, H429–G432, and K505. The active-site GMP-histidine intermediate is H429.

Belongs to the RtcB family. As to quaternary structure, catalytic component of the tRNA-splicing ligase complex. It depends on Mn(2+) as a cofactor.

It catalyses the reaction a 3'-end 3'-phospho-ribonucleotide-RNA + a 5'-end dephospho-ribonucleoside-RNA + GTP = a ribonucleotidyl-ribonucleotide-RNA + GMP + diphosphate. It carries out the reaction a 3'-end 2',3'-cyclophospho-ribonucleotide-RNA + a 5'-end dephospho-ribonucleoside-RNA + GTP + H2O = a ribonucleotidyl-ribonucleotide-RNA + GMP + diphosphate + H(+). Catalytic subunit of the tRNA-splicing ligase complex that acts by directly joining spliced tRNA halves to mature-sized tRNAs by incorporating the precursor-derived splice junction phosphate into the mature tRNA as a canonical 3',5'-phosphodiester. May act as an RNA ligase with broad substrate specificity, and may function toward other RNAs. The chain is RNA-splicing ligase RtcB homolog from Anopheles gambiae (African malaria mosquito).